The primary structure comprises 405 residues: Phosphatidylinositol 5-phosphate 4-kinase type-2 alpha (405 aa).

N-acetylalanine is present on A2. Phosphothreonine is present on T3. S14 is modified (phosphoserine). The PIPK domain maps to 33 to 405; it reads ASDPLLSVLM…RFLDFIGHIL (373 aa). A required for interaction with PIP5K1A region spans residues 59 to 65; the sequence is VMLMPDD. 2 positions are modified to N6-acetyllysine: K89 and K145. The tract at residues 288-328 is disordered; sequence QEEVECEENDGEEEGESDSTHPIGTPPDSPGNTLNSSPPLA. Acidic residues predominate over residues 289–304; it reads EEVECEENDGEEEGES.

Homodimer. Interacts with PIP4K2B; the interaction may regulate localization to the nucleus. Probably interacts with PIP5K1A; the interaction inhibits PIP5K1A kinase activity. Post-translationally, phosphorylated in tyrosines. Phosphorylation is induced by light and increases kinase activity. As to expression, detected in rod photoreceptor cells.

It is found in the cell membrane. The protein resides in the nucleus. The protein localises to the lysosome. It localises to the cytoplasm. Its subcellular location is the photoreceptor inner segment. It is found in the cell projection. The protein resides in the cilium. The protein localises to the photoreceptor outer segment. The catalysed reaction is a 1,2-diacyl-sn-glycero-3-phospho-(1D-myo-inositol-5-phosphate) + ATP = a 1,2-diacyl-sn-glycero-3-phospho-(1D-myo-inositol-4,5-bisphosphate) + ADP + H(+). It carries out the reaction 1,2-dihexadecanoyl-sn-glycero-3-phospho-(1D-myo-inositol-5-phosphate) + ATP = 1,2-dihexadecanoyl-sn-glycero-3-phospho-(1D-myo-inositol-4,5-bisphosphate) + ADP + H(+). It catalyses the reaction 1,2-dihexadecanoyl-sn-glycero-3-phospho-(1D-myo-inositol-5-phosphate) + GTP = 1,2-dihexadecanoyl-sn-glycero-3-phospho-(1D-myo-inositol-4,5-bisphosphate) + GDP + H(+). In rod outer segments, activated by light. In terms of biological role, catalyzes the phosphorylation of phosphatidylinositol 5-phosphate (PtdIns5P) on the fourth hydroxyl of the myo-inositol ring, to form phosphatidylinositol 4,5-bisphosphate (PtdIns(4,5)P2). Has both ATP- and GTP-dependent kinase activities. May exert its function by regulating the levels of PtdIns5P, which functions in the cytosol by increasing AKT activity and in the nucleus signals through ING2. May regulate the pool of cytosolic PtdIns5P in response to the activation of tyrosine phosphorylation. Required for lysosome-peroxisome membrane contacts and intracellular cholesterol transport through modulating peroxisomal PtdIns(4,5)P2 level. In collaboration with PIP4K2B, has a role in mediating autophagy in times of nutrient stress. Required for autophagosome-lysosome fusion and the regulation of cellular lipid metabolism. Negatively regulates insulin signaling through a catalytic-independent mechanism. PIP4Ks interact with PIP5Ks and suppress PIP5K-mediated PtdIns(4,5)P2 synthesis and insulin-dependent conversion to PtdIns(3,4,5)P3. May be involved in thrombopoiesis, and the terminal maturation of megakaryocytes and regulation of their size. The sequence is that of Phosphatidylinositol 5-phosphate 4-kinase type-2 alpha from Mus musculus (Mouse).